The primary structure comprises 392 residues: Multidrug resistance protein MdtL (392 aa).

12 helical membrane passes run 4 to 24, 38 to 58, 70 to 90, 95 to 115, 131 to 151, 158 to 178, 209 to 229, 246 to 266, 270 to 290, 294 to 314, 331 to 351, and 357 to 377; these read FLLC…MYLV, AQLH…MLFA, VAIV…QAHA, LVGR…AFAI, LLNG…HLIM, SLFY…VFIL, ILIT…SPVL, ALMA…LSLF, TLML…SLAT, LTLI…GVAM, VLGI…AIIG, and MLIG…LVVT.

It belongs to the major facilitator superfamily. DHA1 family. MdtL (TC 2.A.1.2.22) subfamily.

Its subcellular location is the cell inner membrane. This Klebsiella pneumoniae (strain 342) protein is Multidrug resistance protein MdtL.